The primary structure comprises 122 residues: Large ribosomal subunit protein uL14 (122 aa).

The protein belongs to the universal ribosomal protein uL14 family. As to quaternary structure, part of the 50S ribosomal subunit. Forms a cluster with proteins L3 and L19. In the 70S ribosome, L14 and L19 interact and together make contacts with the 16S rRNA in bridges B5 and B8.

Functionally, binds to 23S rRNA. Forms part of two intersubunit bridges in the 70S ribosome. The polypeptide is Large ribosomal subunit protein uL14 (Thermobifida fusca (strain YX)).